An 89-amino-acid polypeptide reads, in one-letter code: Small ribosomal subunit protein uS15 (89 aa).

The protein belongs to the universal ribosomal protein uS15 family. As to quaternary structure, part of the 30S ribosomal subunit. Forms a bridge to the 50S subunit in the 70S ribosome, contacting the 23S rRNA.

One of the primary rRNA binding proteins, it binds directly to 16S rRNA where it helps nucleate assembly of the platform of the 30S subunit by binding and bridging several RNA helices of the 16S rRNA. Its function is as follows. Forms an intersubunit bridge (bridge B4) with the 23S rRNA of the 50S subunit in the ribosome. The sequence is that of Small ribosomal subunit protein uS15 from Orientia tsutsugamushi (strain Boryong) (Rickettsia tsutsugamushi).